Here is a 1906-residue protein sequence, read N- to C-terminus: A disintegrin and metalloproteinase with thrombospondin motifs 20 (1906 aa).

Residues 1–26 (MRVAKWLTGLLCPISLLLTGSWEVRF) form the signal peptide. Residues 27–249 (HPRQEALVKT…RSQLHSRNKR (223 aa)) constitute a propeptide that is removed on maturation. N-linked (GlcNAc...) asparagine glycosylation is found at Asn-92 and Asn-221. The disordered stretch occupies residues 201-222 (PCEVSENQMEKTALPSQSSRNT). Residues 255 to 464 (RYVEVMVTAD…GHGECLLDKP (210 aa)) form the Peptidase M12B domain. Cystine bridges form between Cys-330-Cys-383, Cys-359-Cys-365, Cys-377-Cys-459, Cys-415-Cys-443, Cys-486-Cys-508, Cys-497-Cys-518, Cys-503-Cys-537, Cys-531-Cys-542, Cys-565-Cys-602, Cys-569-Cys-607, and Cys-580-Cys-592. A Zn(2+)-binding site is contributed by His-399. Residue Glu-400 is part of the active site. 2 residues coordinate Zn(2+): His-403 and His-409. Positions 465 to 552 (NGRTYDLSPQ…VTRDMETRPV (88 aa)) constitute a Disintegrin domain. The region spanning 553–608 (DGEWGPWGPYSSCSRTCGGGIKSTARLCDRPEPRNGGRYCVGRRMKFRSCNTDSCP) is the TSP type-1 1 domain. 3 N-linked (GlcNAc...) asparagine glycosylation sites follow: Asn-714, Asn-798, and Asn-805. The tract at residues 721–842 (AGVFNSAHYG…FNIPIEERSN (122 aa)) is spacer. 7 consecutive TSP type-1 domains span residues 843-901 (LFSW…MDCE), 906-962 (IIGK…GSCV), 962-1015 (VLTR…NCNE), 1017-1074 (PCPS…RACA), 1075-1131 (SWHV…APCL), 1148-1202 (RAAQ…LCFS), and 1203-1260 (PCGE…AACP). A glycan (N-linked (GlcNAc...) asparagine) is linked at Asn-1057. The tract at residues 1265–1295 (RAPSSSEQPSHVPSRNVPLTHKPGENQDQGA) is disordered. Residues 1266–1277 (APSSSEQPSHVP) show a composition bias toward polar residues. 7 consecutive TSP type-1 domains span residues 1300–1351 (RGNQ…RHCG), 1354–1411 (PCPH…HACP), 1412–1465 (EDVS…KACR), 1468–1526 (RCPS…QDCM), 1527–1584 (RYQW…PHCK), 1585–1648 (YSVV…LRSC), and 1650–1706 (HVAT…NDCK). N-linked (GlcNAc...) asparagine glycosylation occurs at Asn-1562. The GON domain occupies 1707-1906 (LLTTCKELQV…MATGLSIQVL (200 aa)). Asn-1719, Asn-1759, and Asn-1777 each carry an N-linked (GlcNAc...) asparagine glycan.

Zn(2+) serves as cofactor. Post-translationally, the precursor is cleaved by a furin endopeptidase. In terms of processing, glycosylated. Can be O-fucosylated by POFUT2 on a serine or a threonine residue found within the consensus sequence C1-X(2)-(S/T)-C2-G of the TSP type-1 repeat domains where C1 and C2 are the first and second cysteine residue of the repeat, respectively. Fucosylated repeats can then be further glycosylated by the addition of a beta-1,3-glucose residue by the glucosyltransferase, B3GALTL. Fucosylation mediates the efficient secretion of ADAMTS family members. Can also be C-glycosylated with one or two mannose molecules on tryptophan residues within the consensus sequence W-X-X-W of the TPRs, and N-glycosylated. These other glycosylations can also facilitate secretion. In terms of tissue distribution, expressed at low level in testis and brain.

It localises to the secreted. The protein resides in the extracellular space. It is found in the extracellular matrix. In terms of biological role, may play a role in tissue-remodeling process occurring in both normal and pathological conditions. May have a protease-independent function in the transport from the endoplasmic reticulum to the Golgi apparatus of secretory cargos, mediated by the GON domain. The polypeptide is A disintegrin and metalloproteinase with thrombospondin motifs 20 (Adamts20) (Mus musculus (Mouse)).